A 438-amino-acid polypeptide reads, in one-letter code: Myosin light chain kinase, smooth muscle (438 aa).

A Protein kinase domain is found at 1–241 (FRLVEKKTGK…CTQCLQHPWL (241 aa)). Residue Lys-15 participates in ATP binding. A Phosphotyrosine; by ABL1 modification is found at Tyr-97. The active-site Proton acceptor is Asp-107. At Tyr-157 the chain carries Phosphotyrosine; by ABL1. Residues 233–296 (TQCLQHPWLX…SGLSGRKSST (64 aa)) are calmodulin-binding. Phosphoserine is present on residues Ser-281, Ser-282, Ser-294, Ser-295, and Ser-298. Residues 283 to 438 (MAMISGLSGR…GEGGEEEEEE (156 aa)) are telokin. The disordered stretch occupies residues 289 to 309 (LSGRKSSTGSPTSPLNAEKLE). Positions 292-303 (RKSSTGSPTSPL) are enriched in polar residues. Residue Thr-300 is modified to Phosphothreonine. The residue at position 301 (Ser-301) is a Phosphoserine. In terms of domain architecture, Ig-like C2-type spans 331–420 (PYFSKTIRDL…GEATCTAELI (90 aa)). The cysteines at positions 352 and 404 are disulfide-linked.

It belongs to the protein kinase superfamily. CAMK Ser/Thr protein kinase family. In terms of assembly, all isoforms including Telokin bind calmodulin. Interacts with SVIL. Interacts with CTTN; this interaction is reduced during thrombin-induced endothelial cell (EC) contraction but is promoted by the barrier-protective agonist sphingosine 1-phosphate (S1P) within lamellipodia. A complex made of ABL1, CTTN and MYLK regulates cortical actin-based cytoskeletal rearrangement critical to sphingosine 1-phosphate (S1P)-mediated endothelial cell (EC) barrier enhancement. Binds to NAA10/ARD1 and PTK2B/PYK2. Mg(2+) serves as cofactor. It depends on Ca(2+) as a cofactor. The C-terminus is deglutamylated by AGTPBP1/CCP1, AGBL1/CCP4 and AGBL4/CCP6, leading to the formation of Myosin light chain kinase, smooth muscle, deglutamylated form. The consequences of C-terminal deglutamylation are unknown. Post-translationally, can probably be down-regulated by phosphorylation. Tyrosine phosphorylation by ABL1 increases kinase activity, reverses MLCK-mediated inhibition of Arp2/3-mediated actin polymerization, and enhances CTTN-binding. Phosphorylation by SRC promotes CTTN binding.

Its subcellular location is the cytoplasm. The protein localises to the cell projection. The protein resides in the lamellipodium. It is found in the cleavage furrow. It localises to the cytoskeleton. Its subcellular location is the stress fiber. The catalysed reaction is L-seryl-[myosin light chain] + ATP = O-phospho-L-seryl-[myosin light chain] + ADP + H(+). It catalyses the reaction L-threonyl-[myosin light chain] + ATP = O-phospho-L-threonyl-[myosin light chain] + ADP + H(+). Its function is as follows. Calcium/calmodulin-dependent myosin light chain kinase implicated in smooth muscle contraction via phosphorylation of myosin light chains (MLC). Also regulates actin-myosin interaction through a non-kinase activity. Phosphorylates PTK2B/PYK2 and myosin light-chains. Involved in the inflammatory response (e.g. apoptosis, vascular permeability, leukocyte diapedesis), cell motility and morphology, airway hyperreactivity and other activities relevant to asthma. Required for tonic airway smooth muscle contraction that is necessary for physiological and asthmatic airway resistance. Necessary for gastrointestinal motility. Implicated in the regulation of endothelial as well as vascular permeability, probably via the regulation of cytoskeletal rearrangements. In the nervous system it has been shown to control the growth initiation of astrocytic processes in culture and to participate in transmitter release at synapses formed between cultured sympathetic ganglion cells. Critical participant in signaling sequences that result in fibroblast apoptosis. Plays a role in the regulation of epithelial cell survival. Required for epithelial wound healing, especially during actomyosin ring contraction during purse-string wound closure. Mediates RhoA-dependent membrane blebbing. Triggers TRPC5 channel activity in a calcium-dependent signaling, by inducing its subcellular localization at the plasma membrane. Promotes cell migration (including tumor cells) and tumor metastasis. PTK2B/PYK2 activation by phosphorylation mediates ITGB2 activation and is thus essential to trigger neutrophil transmigration during acute lung injury (ALI). May regulate optic nerve head astrocyte migration. Probably involved in mitotic cytoskeletal regulation. Regulates tight junction probably by modulating ZO-1 exchange in the perijunctional actomyosin ring. Mediates burn-induced microvascular barrier injury; triggers endothelial contraction in the development of microvascular hyperpermeability by phosphorylating MLC. Essential for intestinal barrier dysfunction. Mediates Giardia spp.-mediated reduced epithelial barrier function during giardiasis intestinal infection via reorganization of cytoskeletal F-actin and tight junctional ZO-1. Necessary for hypotonicity-induced Ca(2+) entry and subsequent activation of volume-sensitive organic osmolyte/anion channels (VSOAC) in cervical cancer cells. This chain is Myosin light chain kinase, smooth muscle (MYLK), found in Ovis aries (Sheep).